A 330-amino-acid chain; its full sequence is Phenylalanine--tRNA ligase alpha subunit (330 aa).

Mg(2+) is bound at residue Glu-246.

Belongs to the class-II aminoacyl-tRNA synthetase family. Phe-tRNA synthetase alpha subunit type 1 subfamily. Tetramer of two alpha and two beta subunits. Mg(2+) is required as a cofactor.

The protein resides in the cytoplasm. It catalyses the reaction tRNA(Phe) + L-phenylalanine + ATP = L-phenylalanyl-tRNA(Phe) + AMP + diphosphate + H(+). This Wolinella succinogenes (strain ATCC 29543 / DSM 1740 / CCUG 13145 / JCM 31913 / LMG 7466 / NCTC 11488 / FDC 602W) (Vibrio succinogenes) protein is Phenylalanine--tRNA ligase alpha subunit.